The following is a 262-amino-acid chain: 1-(5-phosphoribosyl)-5-[(5-phosphoribosylamino)methylideneamino] imidazole-4-carboxamide isomerase (262 aa).

Asp-8 acts as the Proton acceptor in catalysis. Catalysis depends on Asp-130, which acts as the Proton donor.

The protein belongs to the HisA/HisF family.

Its subcellular location is the cytoplasm. The catalysed reaction is 1-(5-phospho-beta-D-ribosyl)-5-[(5-phospho-beta-D-ribosylamino)methylideneamino]imidazole-4-carboxamide = 5-[(5-phospho-1-deoxy-D-ribulos-1-ylimino)methylamino]-1-(5-phospho-beta-D-ribosyl)imidazole-4-carboxamide. The protein operates within amino-acid biosynthesis; L-histidine biosynthesis; L-histidine from 5-phospho-alpha-D-ribose 1-diphosphate: step 4/9. In Chloroherpeton thalassium (strain ATCC 35110 / GB-78), this protein is 1-(5-phosphoribosyl)-5-[(5-phosphoribosylamino)methylideneamino] imidazole-4-carboxamide isomerase.